Reading from the N-terminus, the 350-residue chain is MIKKAIAKVVEREDLTESEMIQVMDQVMSGEATPAQIAAFITALRMKGETVAEITGAARVMRDKVTRIRVGKNILDMDRDDINVDLETILDTCGTGGSCTNTFNVSTTVAFVVSACGVKVAKHGNRSVSSACGSADVLESLGVNLDVTQETIERCINEIGIGFLFAPALHGAMKYAIGPRKEIGIRTIFNILGPLTNPAGAGCQVLGVYREDLVEKLAHVLKNLGCKRGFVVHGQDGMDEMTLTAETRIAEVTPAGVATRLFRPEELGLSRCGMDDLRGGDAAANAVIVRRVLEGEKGPKRDIVLLNAAFGLVAAGRVVDPAAGLTMAAEAIDSGKALAQLEKLVKLTNE.

5-phospho-alpha-D-ribose 1-diphosphate-binding positions include Gly94, 97-98, Thr102, 104-107, 122-130, and Ser134; these read GS, NVST, and KHGNRSVSS. Gly94 is a binding site for anthranilate. Ser106 provides a ligand contact to Mg(2+). Asn125 is a binding site for anthranilate. Arg180 is an anthranilate binding site. Mg(2+)-binding residues include Asp239 and Glu240.

This sequence belongs to the anthranilate phosphoribosyltransferase family. In terms of assembly, homodimer. Mg(2+) serves as cofactor.

It carries out the reaction N-(5-phospho-beta-D-ribosyl)anthranilate + diphosphate = 5-phospho-alpha-D-ribose 1-diphosphate + anthranilate. Its pathway is amino-acid biosynthesis; L-tryptophan biosynthesis; L-tryptophan from chorismate: step 2/5. Catalyzes the transfer of the phosphoribosyl group of 5-phosphorylribose-1-pyrophosphate (PRPP) to anthranilate to yield N-(5'-phosphoribosyl)-anthranilate (PRA). The polypeptide is Anthranilate phosphoribosyltransferase (Geotalea uraniireducens (strain Rf4) (Geobacter uraniireducens)).